Consider the following 257-residue polypeptide: MLILVSPAKTLDFDNPPGCESYSMPTLLDQSKQLIEVCRTLTPTDIATLMKVSDKIAGLNVARFSSWQKDFTPENAKQAVFAFRGDVYTGLDADTLSEASLQKAQKQLRILSGLYGLLKPLDLMQAYRLEMGTRLANDRGTNLYQFWGDIITDEINKTTEEQGDEFIINLASNEYFKAVKPKQLNAQVITPIFKDCKNGQYKVISFFAKKARGMMVRYILDNHVDSLEALIKFDTAGYYYSEKDSTVNEPVFLREAQ.

The protein belongs to the UPF0246 family.

The protein is UPF0246 protein Shal_1126 of Shewanella halifaxensis (strain HAW-EB4).